A 405-amino-acid polypeptide reads, in one-letter code: Amino sugar nitrososynthase DnmZ (405 aa).

E117 and R332 together coordinate dTDP.

Belongs to the acyl-CoA dehydrogenase family. As to quaternary structure, homotetramer. The cofactor is FAD.

The protein operates within antibiotic biosynthesis. Functionally, nitrososynthase involved in the biosynthesis of baumycin. Catalyzes the double-oxidation of TDP-L-epi-vancosamine to TDP-L-epi-vancosonitrose. The rapid turnover of TDP-L-epi-vancosamine suggests that this compound, or a closely related analog, is the natural substrate for DnmZ. Can also catalyze the double-oxidation of TDP-L-evernosamine to TDP-L-evernitrosose. This chain is Amino sugar nitrososynthase DnmZ, found in Streptomyces peucetius.